We begin with the raw amino-acid sequence, 366 residues long: Dof zinc finger protein DOF1.3 (366 aa).

The interval 22 to 103 (DPYSSSSHVL…KTTELKKPDK (82 aa)) is disordered. Low complexity-rich tracts occupy residues 25 to 45 (SSSS…SLSL) and 56 to 69 (TDNT…NLNN). Composition is skewed to basic and acidic residues over residues 70–83 (ESKE…DQHS) and 91–103 (EEEK…KPDK). The Dof-type zinc finger occupies 105-159 (LPCPRCNSADTKFCYYNNYNVNQPRHFCRKCQRYWTAGGSMRIVPVGSGRRKNKG). Positions 107, 110, 132, and 135 each coordinate Zn(2+).

The protein localises to the nucleus. In terms of biological role, transcription factor that binds specifically to a 5'-AA[AG]G-3' consensus core sequence. In Arabidopsis thaliana (Mouse-ear cress), this protein is Dof zinc finger protein DOF1.3 (DOF1.3).